Consider the following 367-residue polypeptide: tRNA-specific 2-thiouridylase MnmA (367 aa).

ATP is bound by residues 12–19 (GMSGGVDS) and Met38. Residues 98–100 (NPD) are interaction with target base in tRNA. Cys103 functions as the Nucleophile in the catalytic mechanism. Cys103 and Cys200 are joined by a disulfide. ATP is bound at residue Gly128. The interval 150–152 (KDQ) is interaction with tRNA. The active-site Cysteine persulfide intermediate is the Cys200. The segment at 312–313 (RY) is interaction with tRNA.

Belongs to the MnmA/TRMU family. As to quaternary structure, interacts with TusE.

Its subcellular location is the cytoplasm. It carries out the reaction S-sulfanyl-L-cysteinyl-[protein] + uridine(34) in tRNA + AH2 + ATP = 2-thiouridine(34) in tRNA + L-cysteinyl-[protein] + A + AMP + diphosphate + H(+). Its function is as follows. Catalyzes the 2-thiolation of uridine at the wobble position (U34) of tRNA(Lys), tRNA(Glu) and tRNA(Gln), leading to the formation of s(2)U34, the first step of tRNA-mnm(5)s(2)U34 synthesis. Sulfur is provided by IscS, via a sulfur-relay system. Binds ATP and its substrate tRNAs. The protein is tRNA-specific 2-thiouridylase MnmA of Serratia proteamaculans (strain 568).